We begin with the raw amino-acid sequence, 378 residues long: Erythronate-4-phosphate dehydrogenase (378 aa).

Residues S45 and T66 each coordinate substrate. D146 and T175 together coordinate NAD(+). R208 is an active-site residue. D232 provides a ligand contact to NAD(+). E237 is an active-site residue. The Proton donor role is filled by H254. G257 lines the NAD(+) pocket. Y258 contributes to the substrate binding site.

It belongs to the D-isomer specific 2-hydroxyacid dehydrogenase family. PdxB subfamily. In terms of assembly, homodimer.

It is found in the cytoplasm. The catalysed reaction is 4-phospho-D-erythronate + NAD(+) = (R)-3-hydroxy-2-oxo-4-phosphooxybutanoate + NADH + H(+). Its pathway is cofactor biosynthesis; pyridoxine 5'-phosphate biosynthesis; pyridoxine 5'-phosphate from D-erythrose 4-phosphate: step 2/5. Catalyzes the oxidation of erythronate-4-phosphate to 3-hydroxy-2-oxo-4-phosphonooxybutanoate. In Pectobacterium atrosepticum (strain SCRI 1043 / ATCC BAA-672) (Erwinia carotovora subsp. atroseptica), this protein is Erythronate-4-phosphate dehydrogenase.